Reading from the N-terminus, the 169-residue chain is Photosystem I assembly protein Ycf3 (169 aa).

3 TPR repeats span residues 35-68 (AFTYYRDGMSAQSEGEYAEALLNYYEAMRLEIDP), 72-105 (SYILYNIGLIHTSNGEHVKALEYYFQALERNPSL), and 120-153 (GEQAIEQGDSENSEIWFDQAASYWKQAIALAPNN).

The protein belongs to the Ycf3 family.

Its subcellular location is the plastid. The protein localises to the chloroplast thylakoid membrane. In terms of biological role, essential for the assembly of the photosystem I (PSI) complex. May act as a chaperone-like factor to guide the assembly of the PSI subunits. This Staurastrum punctulatum (Green alga) protein is Photosystem I assembly protein Ycf3.